Here is a 335-residue protein sequence, read N- to C-terminus: Anthranilate phosphoribosyltransferase (335 aa).

Residues G80, 83–84 (GD), T88, 90–93 (NIST), 108–116 (KHGNRAVSS), and S120 each bind 5-phospho-alpha-D-ribose 1-diphosphate. G80 contributes to the anthranilate binding site. Position 92 (S92) interacts with Mg(2+). N111 serves as a coordination point for anthranilate. R166 contributes to the anthranilate binding site. Mg(2+) is bound by residues D225 and E226.

The protein belongs to the anthranilate phosphoribosyltransferase family. Homodimer. Mg(2+) serves as cofactor.

The enzyme catalyses N-(5-phospho-beta-D-ribosyl)anthranilate + diphosphate = 5-phospho-alpha-D-ribose 1-diphosphate + anthranilate. Its pathway is amino-acid biosynthesis; L-tryptophan biosynthesis; L-tryptophan from chorismate: step 2/5. Its function is as follows. Catalyzes the transfer of the phosphoribosyl group of 5-phosphorylribose-1-pyrophosphate (PRPP) to anthranilate to yield N-(5'-phosphoribosyl)-anthranilate (PRA). This chain is Anthranilate phosphoribosyltransferase, found in Clostridium kluyveri (strain NBRC 12016).